Consider the following 315-residue polypeptide: Protein sprouty homolog 2 (315 aa).

Polar residues predominate over residues 1–15 (MEARAQSGNGSQPLL). A disordered region spans residues 1–140 (MEARAQSGNG…SEQRLLGSSF (140 aa)). The segment covering 20-32 (DGGRPRGEPDPRD) has biased composition (basic and acidic residues). The span at 108-140 (SRSISTVSSGSRSSTRTSTSSSSSEQRLLGSSF) shows a compositional bias: low complexity. Residues 118 to 315 (SRSSTRTSTS…VPRRNFEKPT (198 aa)) are required for interaction with CAV1. The 115-residue stretch at 177–291 (RCEDCGKCKC…CYDRVNRPGC (115 aa)) folds into the SPR domain. The tract at residues 178–315 (CEDCGKCKCK…VPRRNFEKPT (138 aa)) is required for interaction with TESK1.

This sequence belongs to the sprouty family. As to quaternary structure, forms heterodimers with SPRY1. Forms a tripartite complex containing GAB1, METTL13 and SPRY2. Within the complex interacts with METTL13. Interacts with RAF1. Interacts (via C-terminus) with TESK1 (via C-terminus); the interaction disrupts SPRY2 interaction with GRB2, potentially via disruption of SPRY2 serine dephosphorylation. Interacts with PPP2R1A/PP2A-A and PPP2CA/PP2A-C; the interaction with PPP2CA/PP2A-C is inhibited by interaction with TESK1, possibly by vesicular sequestration of SPRY2. Inhibition of the interaction with the serine/threonine-protein phosphatase 2A (PP2A) holoenzyme results in loss of PP2A-mediated dephosphorylation, resulting in the loss of SPRY2 interaction with GRB2. Interacts with GRB2. Interacts with CBL/C-CBL; the interaction inhibits CBL-mediated ubiquitination of EGFR. Interacts (via C-terminus) with CAV1 (via C-terminus). Cleaved at Pro-144 by the prolyl endopeptidase FAP (seprase) activity (in vitro).

Its subcellular location is the cytoplasm. It is found in the cytoskeleton. The protein resides in the cell projection. It localises to the ruffle membrane. Functionally, antagonist of fibroblast growth factor (FGF) pathways via inhibition of FGF-mediated phosphorylation of ERK1/2. Thereby acts as an antagonist of FGF-induced retinal lens fiber differentiation, may inhibit limb bud outgrowth and may negatively modulate respiratory organogenesis. Inhibits TGFB-induced epithelial-to-mesenchymal transition in retinal lens epithelial cells. Inhibits CBL/C-CBL-mediated EGFR ubiquitination. The protein is Protein sprouty homolog 2 (SPRY2) of Pongo abelii (Sumatran orangutan).